A 1115-amino-acid chain; its full sequence is Phytochrome E (1115 aa).

The 171-residue stretch at 213 to 383 (DIGTLCDTVV…AFSLQLYMEL (171 aa)) folds into the GAF domain. Cysteine 318 is a binding site for phytochromobilin. One can recognise a PAS 1 domain in the interval 598–669 (MALELVRLVE…ALMCRALQGE (72 aa)). One can recognise a PAC domain in the interval 672–728 (RNVEVKLLKFGNHPTKEVVYLVVNACTSRDYKNDIIGVCFVGQDITPEKAVMDKFVR). One can recognise a PAS 2 domain in the interval 732-803 (DYEAIIQSLN…DALTKFMILL (72 aa)). In terms of domain architecture, Histidine kinase spans 880-1100 (YIQQQMKNPL…YFLIDLDFKT (221 aa)).

The protein belongs to the phytochrome family. As to quaternary structure, homodimer. Contains one covalently linked phytochromobilin chromophore.

Functionally, regulatory photoreceptor which exists in two forms that are reversibly interconvertible by light: the Pr form that absorbs maximally in the red region of the spectrum and the Pfr form that absorbs maximally in the far-red region. Photoconversion of Pr to Pfr induces an array of morphogenic responses, whereas reconversion of Pfr to Pr cancels the induction of those responses. Pfr controls the expression of a number of nuclear genes including those encoding the small subunit of ribulose-bisphosphate carboxylase, chlorophyll A/B binding protein, protochlorophyllide reductase, rRNA, etc. It also controls the expression of its own gene(s) in a negative feedback fashion. This Ipomoea nil (Japanese morning glory) protein is Phytochrome E (PHYE).